The primary structure comprises 243 residues: Proteasome subunit alpha (243 aa).

It belongs to the peptidase T1A family. The 20S proteasome core is composed of 14 alpha and 14 beta subunits that assemble into four stacked heptameric rings, resulting in a barrel-shaped structure. The two inner rings, each composed of seven catalytic beta subunits, are sandwiched by two outer rings, each composed of seven alpha subunits. The catalytic chamber with the active sites is on the inside of the barrel. Has a gated structure, the ends of the cylinder being occluded by the N-termini of the alpha-subunits. Is capped at one or both ends by the proteasome regulatory ATPase, PAN.

Its subcellular location is the cytoplasm. Its activity is regulated as follows. The formation of the proteasomal ATPase PAN-20S proteasome complex, via the docking of the C-termini of PAN into the intersubunit pockets in the alpha-rings, triggers opening of the gate for substrate entry. Interconversion between the open-gate and close-gate conformations leads to a dynamic regulation of the 20S proteasome proteolysis activity. In terms of biological role, component of the proteasome core, a large protease complex with broad specificity involved in protein degradation. This chain is Proteasome subunit alpha, found in Pyrobaculum aerophilum (strain ATCC 51768 / DSM 7523 / JCM 9630 / CIP 104966 / NBRC 100827 / IM2).